The sequence spans 225 residues: PKHD-type hydroxylase YbiX (225 aa).

A Fe2OG dioxygenase domain is found at Thr78 to Ser177. Residues His96, Asp98, and His158 each coordinate Fe cation. A 2-oxoglutarate-binding site is contributed by Arg168.

Fe(2+) is required as a cofactor. It depends on L-ascorbate as a cofactor.

This is PKHD-type hydroxylase YbiX from Escherichia coli (strain SMS-3-5 / SECEC).